The primary structure comprises 155 residues: S-ribosylhomocysteine lyase (155 aa).

Residues H53, H57, and C121 each coordinate Fe cation.

The protein belongs to the LuxS family. As to quaternary structure, homodimer. The cofactor is Fe cation.

The enzyme catalyses S-(5-deoxy-D-ribos-5-yl)-L-homocysteine = (S)-4,5-dihydroxypentane-2,3-dione + L-homocysteine. In terms of biological role, involved in the synthesis of autoinducer 2 (AI-2) which is secreted by bacteria and is used to communicate both the cell density and the metabolic potential of the environment. The regulation of gene expression in response to changes in cell density is called quorum sensing. Catalyzes the transformation of S-ribosylhomocysteine (RHC) to homocysteine (HC) and 4,5-dihydroxy-2,3-pentadione (DPD). The protein is S-ribosylhomocysteine lyase of Thermus thermophilus (strain ATCC BAA-163 / DSM 7039 / HB27).